The following is a 158-amino-acid chain: Flagellar assembly factor FliW (158 aa).

This sequence belongs to the FliW family. In terms of assembly, interacts with translational regulator CsrA and flagellin(s).

Its subcellular location is the cytoplasm. In terms of biological role, acts as an anti-CsrA protein, binds CsrA and prevents it from repressing translation of its target genes, one of which is flagellin. Binds to flagellin and participates in the assembly of the flagellum. The polypeptide is Flagellar assembly factor FliW (Moorella thermoacetica (strain ATCC 39073 / JCM 9320)).